The chain runs to 1427 residues: Double-stranded DNA deaminase toxin A (1427 aa).

The next 2 helical transmembrane spans lie at 16–36 (ALAG…AVAF) and 43–63 (FGVA…LLSI). YD repeat units follow at residues 469 to 501 (RVVE…DGRT), 548 to 584 (YDDA…GPDG), 720 to 747 (NARG…GRLR), and 977 to 1008 (YDGA…ISRA). Residues 1264–1427 (IGLNGGANVY…SPKSPTKGGC (164 aa)) form a C-terminal effector domain, has cytidine deaminase activity region. Residues H1345, C1373, and C1376 each contribute to the Zn(2+) site. The interval 1402–1427 (KRGATGETKVFTGNSNSPKSPTKGGC) is disordered. Residues 1412-1421 (FTGNSNSPKS) are compositionally biased toward polar residues.

It belongs to the RHS/WapA nuclease family. As to quaternary structure, the toxic domain forms a 1:1 complex with the DddI immunity protein.

It is found in the membrane. The catalysed reaction is a 2'-deoxycytidine in double-stranded DNA + H2O + H(+) = a 2'-deoxyuridine in double-stranded DNA + NH4(+). Toxic component of a toxin-immunity protein module, which functions as a cellular contact-dependent growth inhibition (CDI) system. CDI modules allow bacteria to communicate with and inhibit the growth of closely related neighboring bacteria in a contact-dependent fashion. Bacteria that have this module inhibit or kill bacteria without it, giving them a growth advantage. Probably specifically inhibited by cognate immunity protein DddI. The C-terminal 163 residue fragment has double-stranded DNA cytidine deaminase activity; it does not deaminate ssDNA, ssRNA or dsRNA. Leads to C:G to T:A conversions in deaminated DNA. Preferentially deaminates 5'-TC-3' substrates. The protein is Double-stranded DNA deaminase toxin A of Burkholderia cenocepacia (strain H111).